Reading from the N-terminus, the 80-residue chain is MKNNINLQDVFLNQVRKENIQITIYLVNGFQLKGFVKGFDNYTIVLDSDGKQQLIYKHAISTILPITPINFMQSSKKQGE.

The Sm domain maps to 9 to 69 (DVFLNQVRKE…ISTILPITPI (61 aa)).

Belongs to the Hfq family. As to quaternary structure, homohexamer.

Functionally, RNA chaperone that binds small regulatory RNA (sRNAs) and mRNAs to facilitate mRNA translational regulation in response to envelope stress, environmental stress and changes in metabolite concentrations. Also binds with high specificity to tRNAs. In Alkaliphilus metalliredigens (strain QYMF), this protein is RNA-binding protein Hfq.